A 468-amino-acid chain; its full sequence is MDISYIFVICLMALCSGGSSLSQVEGKQKSGRGRGSMWWGIAKVGEPNNITPIMYMDPAIHSTLRRKQRRLVRDNPGVLGALVKGANLAISECQHQFRNRRWNCSTRNFSRGKNLFGKIVDRGCRETSFIYAITSAAVTHSIARACSEGTIESCTCDYSHQSRSPQANHQAGSVAGVRDWEWGGCSDNIGFGFKFSREFVDTGERGRNLREKMNLHNNEAGRAHVQAEMRQECKCHGMSGSCTVKTCWMRLANFRVIGDNLKARFDGATRVQVTNSLRATNALAPVSPNAAGSNSVGSNGLIIPQSGLVYGEEEERMLNDHMPDILLENSHPISKIHHPNMPSPNSLPQAGQRGGRNGRRQGRKHNRYHFQLNPHNPEHKPPGSKDLVYLEPSPSFCEKNLRQGILGTHGRQCNETSLGVDGCGLMCCGRGYRRDEVVVVERCACTFHWCCEVKCKLCRTKKVIYTCL.

An N-terminal signal peptide occupies residues 1–17; it reads MDISYIFVICLMALCSG. The binds porcupine stretch occupies residues 83-106; sequence VKGANLAISECQHQFRNRRWNCST. Cys93 and Cys104 are disulfide-bonded. N-linked (GlcNAc...) asparagine glycans are attached at residues Asn103 and Asn108. Cystine bridges form between Cys146/Cys154, Cys156/Cys185, Cys233/Cys247, and Cys235/Cys242. Residue Ser239 is the site of O-palmitoleoyl serine; by PORCN attachment. A disordered region spans residues 333–362; it reads ISKIHHPNMPSPNSLPQAGQRGGRNGRRQG. 6 disulfide bridges follow: Cys397-Cys428, Cys413-Cys423, Cys427-Cys467, Cys443-Cys458, Cys445-Cys455, and Cys450-Cys451. Asn414 carries an N-linked (GlcNAc...) asparagine glycan.

This sequence belongs to the Wnt family. As to quaternary structure, monomer; folds by intramolecular disulfide bonds. Interacts with porcupine (por). Interacts with wls; in the Golgi. Interacts with en. Interacts with the proteoglycan Cow (heparan sulfate-bound form); this stabilizes wg and promotes its extracellular distribution. Interacts with peg; the interaction facilitates short-range diffusion of wg. Palmitoleoylated by porcupine. The lipid group functions as a sorting signal, targeting the ligand to polarized vesicles that transport wg to unique sites at the cell surface. Depalmitoleoylated by notum, leading to inhibit Wnt signaling pathway. Post-translationally, major form is glycosylated at 2 sites, glycosylation is stimulated by porcupine at the ER. In terms of tissue distribution, segmented expression in embryos. In embryonic tracheal cells, expression is in stripes flanking the tracheal placode.

It is found in the secreted. The protein localises to the synapse. The protein resides in the membrane. It localises to the extracellular space. Its subcellular location is the extracellular matrix. Functionally, binds as a ligand to a family of frizzled seven-transmembrane receptors and acts through a cascade of genes on the nucleus. Segment polarity protein. May be a growth factor. Acts on neighboring cells to regulate at least one gene, the homeobox segmentation gene engrailed. Wg signal represses arm phosphorylation. Wg signaling operates by inactivating the sgg repression of engrailed autoactivation. Wg and Wnt2 have a role in the developing trachea and together are responsible for all dorsal trunk formation. Wg also acts in the developing epidermis. Acts as a morphogen, and diffuses long distances despite its lipidation. Lipophorin is required for diffusion, probably by acting as vehicle for its movement, explaining how it can spread over long distances despite its lipidation. In non-neuronal cells, wls directs wg secretion via clathrin-mediated endocytosis and the retromer complex (a conserved protein complex consisting of Vps26 and Vps35) to sustain a wls traffic loop encompassing the Golgi, the cell surface, an endocytic compartment and a retrograde route leading back to the Golgi. In neuronal cells (the larval motorneuron NMJ), wg signal moves across the synapse through the release of wls-containing exosome-like vesicles. In Drosophila melanogaster (Fruit fly), this protein is Protein wingless (wg).